The following is a 738-amino-acid chain: NADH dehydrogenase [ubiquinone] iron-sulfur protein 1, mitochondrial (738 aa).

The transit peptide at 1 to 27 directs the protein to the mitochondrion; the sequence is MGLGLLASRALRSSRIIRNSTRTIVST. Positions 66–144 constitute a 2Fe-2S ferredoxin-type domain; it reads DVIEVFVDGY…GMKIKTDTPI (79 aa). [2Fe-2S] cluster contacts are provided by C100, C111, C114, and C128. The region spanning 144 to 183 is the 4Fe-4S His(Cys)3-ligated-type domain; that stretch reads IAKKAREGVMEFLLMNHPLDCPICDQGGECDLQDQSMAFG. Positions 160, 164, 167, 173, 212, 215, 218, and 262 each coordinate [4Fe-4S] cluster. Residues 281–337 enclose the 4Fe-4S Mo/W bis-MGD-type domain; the sequence is LKGTESIDVTDAVGSNIRIDSRGPEVMRVVPRLNEDINEEWISDKTRFFYDGLKRQR.

Belongs to the complex I 75 kDa subunit family. Complex I is composed of about 45 different subunits. This is a component of the iron-sulfur (IP) fragment of the enzyme. [2Fe-2S] cluster serves as cofactor. [4Fe-4S] cluster is required as a cofactor.

It is found in the mitochondrion inner membrane. It carries out the reaction a ubiquinone + NADH + 5 H(+)(in) = a ubiquinol + NAD(+) + 4 H(+)(out). In terms of biological role, core subunit of the mitochondrial membrane respiratory chain NADH dehydrogenase (Complex I) that is believed to belong to the minimal assembly required for catalysis. Complex I functions in the transfer of electrons from NADH to the respiratory chain. The immediate electron acceptor for the enzyme is believed to be ubiquinone. This is the largest subunit of complex I and it is a component of the iron-sulfur (IP) fragment of the enzyme. It may form part of the active site crevice where NADH is oxidized. In Solanum tuberosum (Potato), this protein is NADH dehydrogenase [ubiquinone] iron-sulfur protein 1, mitochondrial.